The primary structure comprises 320 residues: Methylenetetrahydrofolate dehydrogenase [NAD(+)] (320 aa).

C152 is an active-site residue. NAD(+) contacts are provided by residues 187 to 188 and 210 to 211; these read RS and DI.

Belongs to the tetrahydrofolate dehydrogenase/cyclohydrolase family. As to quaternary structure, homodimer.

It is found in the cytoplasm. The protein resides in the nucleus. The enzyme catalyses (6R)-5,10-methylene-5,6,7,8-tetrahydrofolate + NAD(+) = (6R)-5,10-methenyltetrahydrofolate + NADH. It participates in one-carbon metabolism; tetrahydrofolate interconversion. Its function is as follows. Catalyzes oxidation of cytoplasmic one-carbon units for purine biosynthesis. In Schizosaccharomyces pombe (strain 972 / ATCC 24843) (Fission yeast), this protein is Methylenetetrahydrofolate dehydrogenase [NAD(+)] (mtd1).